We begin with the raw amino-acid sequence, 308 residues long: Oxygen-dependent coproporphyrinogen-III oxidase (308 aa).

A substrate-binding site is contributed by S100. Residues H104 and H114 each contribute to the a divalent metal cation site. H114 serves as the catalytic Proton donor. Residue 116–118 (NFR) coordinates substrate. The a divalent metal cation site is built by H153 and H183. The tract at residues 248 to 283 (YVEFNLVFDRGTIFGLQSGGRTESILSSMPPIATWK) is important for dimerization. 266–268 (GGR) is a substrate binding site.

The protein belongs to the aerobic coproporphyrinogen-III oxidase family. In terms of assembly, homodimer. A divalent metal cation serves as cofactor.

Its subcellular location is the cytoplasm. It carries out the reaction coproporphyrinogen III + O2 + 2 H(+) = protoporphyrinogen IX + 2 CO2 + 2 H2O. It participates in porphyrin-containing compound metabolism; protoporphyrin-IX biosynthesis; protoporphyrinogen-IX from coproporphyrinogen-III (O2 route): step 1/1. Its function is as follows. Involved in the heme biosynthesis. Catalyzes the aerobic oxidative decarboxylation of propionate groups of rings A and B of coproporphyrinogen-III to yield the vinyl groups in protoporphyrinogen-IX. This Francisella tularensis subsp. tularensis (strain FSC 198) protein is Oxygen-dependent coproporphyrinogen-III oxidase.